Consider the following 338-residue polypeptide: Glycerol-3-phosphate dehydrogenase [NAD(P)+] (338 aa).

NADPH is bound by residues Ser13, Trp14, and Lys108. The sn-glycerol 3-phosphate site is built by Lys108, Gly139, and Ser141. Ala143 contributes to the NADPH binding site. Sn-glycerol 3-phosphate contacts are provided by Lys194, Asp247, Ser257, Arg258, and Asn259. Catalysis depends on Lys194, which acts as the Proton acceptor. Arg258 is a binding site for NADPH. NADPH is bound by residues Val282 and Glu284.

The protein belongs to the NAD-dependent glycerol-3-phosphate dehydrogenase family.

The protein localises to the cytoplasm. The enzyme catalyses sn-glycerol 3-phosphate + NAD(+) = dihydroxyacetone phosphate + NADH + H(+). It carries out the reaction sn-glycerol 3-phosphate + NADP(+) = dihydroxyacetone phosphate + NADPH + H(+). Its pathway is membrane lipid metabolism; glycerophospholipid metabolism. Catalyzes the reduction of the glycolytic intermediate dihydroxyacetone phosphate (DHAP) to sn-glycerol 3-phosphate (G3P), the key precursor for phospholipid synthesis. This Streptococcus pneumoniae (strain Hungary19A-6) protein is Glycerol-3-phosphate dehydrogenase [NAD(P)+].